The sequence spans 260 residues: MRRILCLAVVIFIINDVSSQGLGSNKNWKKSGMSLSSPGNKKPTGNNNAVPQKSKMNNVNQNSLSQPKRPSHPGNSMYFMGNQGPMGMMGGFGMGMNNKQMREFMIAKRTHGVSPFLKKKICHMAKVAPPVNGIMPSPPQLYAQGFKIRRIGKWFSHDLDWSEGVAMCHNKEMEHRGCEKTPSAKWGRMFPGMGGMGGMGGMGGMMMGSRPMASCDVTKPNSCGNPALMKCSKYHKDRFGMPVCCATSEMTANQLENMGF.

The first 19 residues, Met1–Ser19, serve as a signal peptide directing secretion. The disordered stretch occupies residues Gly23–Asn75. Residues Met33 to Lys68 show a composition bias toward polar residues.

Expressed in mantle distal zone, mantle margin and grafted pearl pockets. Not expressed in adductor muscle, gills, hemocytes or ungrafted pearl pockets. Within the mantle, specifically expressed in mineralizing outer epithelium cells (at protein level). After secretion incorporated into acid-insoluble nacre matrix of shell and pearl (at protein level). Not found in acid-insoluble matrix of shell prisms (at protein level).

The protein resides in the secreted. This Margaritifera margaritifera (Freshwater pearl mussel) protein is Methionine-rich nacre protein.